The following is a 508-amino-acid chain: Methionine--tRNA ligase (508 aa).

The short motif at 12–22 is the 'HIGH' region element; sequence YYVNDVAHIGH. A 'KMSKS' region motif is present at residues 295-299; that stretch reads KISKS. Lysine 298 contacts ATP.

It belongs to the class-I aminoacyl-tRNA synthetase family. MetG type 2B subfamily. Monomer.

The protein localises to the cytoplasm. The enzyme catalyses tRNA(Met) + L-methionine + ATP = L-methionyl-tRNA(Met) + AMP + diphosphate. Functionally, is required not only for elongation of protein synthesis but also for the initiation of all mRNA translation through initiator tRNA(fMet) aminoacylation. The polypeptide is Methionine--tRNA ligase (metG) (Rickettsia prowazekii (strain Madrid E)).